Reading from the N-terminus, the 494-residue chain is Serine/threonine-protein kinase PBL13 (494 aa).

Residue cysteine 4 is the site of S-palmitoyl cysteine attachment. A Phosphothreonine modification is found at threonine 65. A Protein kinase domain is found at 76-356 (FSSSNFLGEG…STVVSVLQDI (281 aa)). Residues 82–90 (LGEGGFGPV) and lysine 111 contribute to the ATP site. Tyrosine 156 is modified (phosphotyrosine). The active-site Proton acceptor is the aspartate 206. Phosphoserine is present on serine 210. A Phosphoserine; by autocatalysis modification is found at serine 240. Threonine 241 and threonine 246 each carry phosphothreonine. Position 254 is a phosphotyrosine (tyrosine 254). Phosphoserine; by autocatalysis is present on serine 321. A phosphothreonine; by autocatalysis mark is found at threonine 323 and threonine 383. The residue at position 384 (serine 384) is a Phosphoserine; by autocatalysis. Residues threonine 395, threonine 398, threonine 406, threonine 413, threonine 421, and threonine 428 each carry the phosphothreonine; by autocatalysis modification. A Phosphoserine; by autocatalysis modification is found at serine 429. Residues 434–471 (DKTRREVKETSLQNFDKPRNVSTTDNHQKFRSPAHTAR) form a disordered region. Threonine 443 carries the post-translational modification Phosphothreonine; by autocatalysis. The span at 443–458 (TSLQNFDKPRNVSTTD) shows a compositional bias: polar residues. A phosphoserine; by autocatalysis mark is found at serine 444 and serine 455. At threonine 456 the chain carries Phosphothreonine; by autocatalysis. The span at 462-471 (KFRSPAHTAR) shows a compositional bias: basic residues. The residue at position 481 (tyrosine 481) is a Phosphotyrosine; by autocatalysis.

The protein belongs to the protein kinase superfamily. Ser/Thr protein kinase family. As to quaternary structure, interacts with RBHOD. Interaction is disrupted by flagellin-induced immune signaling.

It localises to the cell membrane. It carries out the reaction L-seryl-[protein] + ATP = O-phospho-L-seryl-[protein] + ADP + H(+). The enzyme catalyses L-threonyl-[protein] + ATP = O-phospho-L-threonyl-[protein] + ADP + H(+). Involved in defense responses. Acts as a negative regulator of plant immune responses. This Arabidopsis thaliana (Mouse-ear cress) protein is Serine/threonine-protein kinase PBL13.